Reading from the N-terminus, the 300-residue chain is D-alanine--D-alanine ligase (300 aa).

The 195-residue stretch at 99-293 (KKILKYANIN…FAELLNSIVK (195 aa)) folds into the ATP-grasp domain. 126 to 181 (IEKIGYPVFVKPNSGGSSVATNLVKNKEGIKEAVELALKYDKEVMIENYTKGEEIT) is an ATP binding site. Positions 248, 260, and 262 each coordinate Mg(2+).

Belongs to the D-alanine--D-alanine ligase family. It depends on Mg(2+) as a cofactor. Requires Mn(2+) as cofactor.

The protein resides in the cytoplasm. It catalyses the reaction 2 D-alanine + ATP = D-alanyl-D-alanine + ADP + phosphate + H(+). The protein operates within cell wall biogenesis; peptidoglycan biosynthesis. Functionally, cell wall formation. This chain is D-alanine--D-alanine ligase, found in Clostridium botulinum (strain Loch Maree / Type A3).